The following is a 217-amino-acid chain: Small ribosomal subunit protein uS3c (217 aa).

One can recognise a KH type-2 domain in the interval 39–109 (IRNFLRTKLI…RFRITITYIP (71 aa)).

Belongs to the universal ribosomal protein uS3 family. Part of the 30S ribosomal subunit.

Its subcellular location is the plastid. The protein localises to the chloroplast. In Chlorokybus atmophyticus (Soil alga), this protein is Small ribosomal subunit protein uS3c (rps3).